Here is a 256-residue protein sequence, read N- to C-terminus: Polycomb group RING finger protein 5 (256 aa).

Residues 18–57 (CYICKGYLIKPTTVTECLHTFCKTCIVQHFEDSNDCPRCG) form an RING-type zinc finger. Composition is skewed to basic and acidic residues over residues 94–103 (ESEFWKKNKP) and 110–120 (DTSKADKPKVD). A disordered region spans residues 94-133 (ESEFWKKNKPQENGQDDTSKADKPKVDEEGDENEDDKDYH).

As to quaternary structure, component of a PRC1-like complex that contains PCGF5, RNF2 and UBE2D3. Interacts with RNF2; the interaction is direct. Interacts with CBX6, CBX7 and CBX8. Interacts with AUTS2; the interaction is direct. Identified in a complex that contains AUTS2, PCGF5, CSNK2B and RNF2.

It is found in the nucleus. The protein resides in the nucleoplasm. In terms of biological role, component of a Polycomb group (PcG) multiprotein PRC1-like complex, a complex class required to maintain the transcriptionally repressive state of many genes, including Hox genes, throughout development. PcG PRC1 complex acts via chromatin remodeling and modification of histones; it mediates monoubiquitination of histone H2A 'Lys-119', rendering chromatin heritably changed in its expressibility. Within the PRC1-like complex, regulates RNF2 ubiquitin ligase activity. Plays a redundant role with PCGF3 as part of a PRC1-like complex that mediates monoubiquitination of histone H2A 'Lys-119' on the X chromosome and is required for normal silencing of one copy of the X chromosome in XX females. This Homo sapiens (Human) protein is Polycomb group RING finger protein 5 (PCGF5).